A 54-amino-acid polypeptide reads, in one-letter code: Ovomucoid (54 aa).

In terms of domain architecture, Kazal-like spans Val4–Cys54. Cystine bridges form between Cys6–Cys36, Cys14–Cys33, and Cys22–Cys54. Asn43 carries an N-linked (GlcNAc...) asparagine glycan.

It localises to the secreted. The chain is Ovomucoid from Megapodius freycinet (Dusky scrubfowl).